The chain runs to 425 residues: Enolase (425 aa).

Position 170 (glutamine 170) interacts with (2R)-2-phosphoglycerate. The active-site Proton donor is glutamate 214. 3 residues coordinate Mg(2+): aspartate 250, glutamate 291, and aspartate 317. Positions 342, 371, 372, and 393 each coordinate (2R)-2-phosphoglycerate. Lysine 342 acts as the Proton acceptor in catalysis.

This sequence belongs to the enolase family. Mg(2+) is required as a cofactor.

It is found in the cytoplasm. Its subcellular location is the secreted. It localises to the cell surface. The enzyme catalyses (2R)-2-phosphoglycerate = phosphoenolpyruvate + H2O. The protein operates within carbohydrate degradation; glycolysis; pyruvate from D-glyceraldehyde 3-phosphate: step 4/5. Functionally, catalyzes the reversible conversion of 2-phosphoglycerate (2-PG) into phosphoenolpyruvate (PEP). It is essential for the degradation of carbohydrates via glycolysis. This Methanococcoides burtonii (strain DSM 6242 / NBRC 107633 / OCM 468 / ACE-M) protein is Enolase.